A 414-amino-acid polypeptide reads, in one-letter code: Light-independent protochlorophyllide reductase subunit N (414 aa).

Residues Cys16, Cys41, and Cys98 each contribute to the [4Fe-4S] cluster site.

Belongs to the BchN/ChlN family. In terms of assembly, protochlorophyllide reductase is composed of three subunits; BchL, BchN and BchB. Forms a heterotetramer of two BchB and two BchN subunits. [4Fe-4S] cluster serves as cofactor.

The catalysed reaction is chlorophyllide a + oxidized 2[4Fe-4S]-[ferredoxin] + 2 ADP + 2 phosphate = protochlorophyllide a + reduced 2[4Fe-4S]-[ferredoxin] + 2 ATP + 2 H2O. It participates in porphyrin-containing compound metabolism; bacteriochlorophyll biosynthesis (light-independent). Its function is as follows. Component of the dark-operative protochlorophyllide reductase (DPOR) that uses Mg-ATP and reduced ferredoxin to reduce ring D of protochlorophyllide (Pchlide) to form chlorophyllide a (Chlide). This reaction is light-independent. The NB-protein (BchN-BchB) is the catalytic component of the complex. In Roseiflexus castenholzii (strain DSM 13941 / HLO8), this protein is Light-independent protochlorophyllide reductase subunit N.